A 321-amino-acid polypeptide reads, in one-letter code: Thioredoxin reductase tcpT (321 aa).

FAD contacts are provided by residues 14-17 (GGPA), 36-41 (DSGRYR), H49, and A114. An intrachain disulfide couples C138 to C141. FAD-binding positions include D282 and 289–290 (NV).

It belongs to the class-II pyridine nucleotide-disulfide oxidoreductase family. As to quaternary structure, homodimer. It depends on FAD as a cofactor.

The protein operates within secondary metabolite biosynthesis. In terms of biological role, thioredoxin reductase; part of the gene cluster that mediates the biosynthesis of an unusual class of epipolythiodioxopiperazines (ETPs) lacking the reactive thiol group important for toxicity. Firstly, L-tyrosine is prenylated by tcpD, before undergoing condensation with L-glycine in a reaction catalyzed by the NRPS tcpP leading to the diketopiperazine (DKP) backbone. Afterwards the alpha-carbon of tyrosine is oxidized by the cytochrome P450 tcpC to form a hydroxyl group. However, in contrast other ETP biosynthesis pathways studied so far, tcpC is not able to bishydroxylate the DKP at both alpha-carbon positions, but hydroxylates the alpha-carbon of the tyrosine part and the nitrogen of the glycine part. The next steps involve an alpha,beta-elimination reaction catalyzed by tcpI, a methylation by the methyltransferase tcpN the action of the four enzyme cascade tcpG/K/J/I. Due to a dysfunctional cytochrome P450 monooxygenase tcpC, the pathway leads to the biosynthesis of probable non-toxic metabolites lacking the reactive thiol group. This is Thioredoxin reductase tcpT from Claviceps purpurea (strain 20.1) (Ergot fungus).